A 269-amino-acid chain; its full sequence is Regulatory protein RecX (269 aa).

Belongs to the RecX family.

It localises to the cytoplasm. In terms of biological role, modulates RecA activity. This Geobacillus kaustophilus (strain HTA426) protein is Regulatory protein RecX.